The following is a 375-amino-acid chain: Alcohol dehydrogenase 1 (375 aa).

S1 is modified (N-acetylserine). Residues C46, H67, C97, C100, C103, C111, and C174 each contribute to the Zn(2+) site. NAD(+) is bound by residues 199–204 (GLGGVG), D223, K228, 293–295 (VGV), and R370.

This sequence belongs to the zinc-containing alcohol dehydrogenase family. Class-I subfamily. Homodimer. Zn(2+) is required as a cofactor.

Its subcellular location is the cytoplasm. It catalyses the reaction a primary alcohol + NAD(+) = an aldehyde + NADH + H(+). The enzyme catalyses a secondary alcohol + NAD(+) = a ketone + NADH + H(+). The polypeptide is Alcohol dehydrogenase 1 (Naja naja (Indian cobra)).